Reading from the N-terminus, the 242-residue chain is Aliphatic sulfonates import ATP-binding protein SsuB 1 (242 aa).

The region spanning 11–227 (VAVRRLSRAF…RPSHPDFEDL (217 aa)) is the ABC transporter domain. 43–50 (GESGSGKT) contributes to the ATP binding site.

Belongs to the ABC transporter superfamily. Aliphatic sulfonates importer (TC 3.A.1.17.2) family. As to quaternary structure, the complex is composed of two ATP-binding proteins (SsuB), two transmembrane proteins (SsuC) and a solute-binding protein (SsuA).

The protein localises to the cell inner membrane. The enzyme catalyses ATP + H2O + aliphatic sulfonate-[sulfonate-binding protein]Side 1 = ADP + phosphate + aliphatic sulfonateSide 2 + [sulfonate-binding protein]Side 1.. Functionally, part of the ABC transporter complex SsuABC involved in aliphatic sulfonates import. Responsible for energy coupling to the transport system. This is Aliphatic sulfonates import ATP-binding protein SsuB 1 from Paracoccus denitrificans (strain Pd 1222).